The chain runs to 463 residues: uncharacterized protein (463 aa).

In terms of domain architecture, HTH gntR-type spans 13–81 (IPLYQQLYRY…PRSGWFADYH (69 aa)). A DNA-binding region (H-T-H motif) is located at residues 41 to 60 (KRLLANQLSISQTTVERAYE). Lysine 308 is subject to N6-(pyridoxal phosphate)lysine.

This sequence in the C-terminal section; belongs to the class-I pyridoxal-phosphate-dependent aminotransferase family. Requires pyridoxal 5'-phosphate as cofactor.

This is an uncharacterized protein from Bacillus subtilis (strain 168).